The chain runs to 87 residues: Small ribosomal subunit protein uS15 (87 aa).

This sequence belongs to the universal ribosomal protein uS15 family. Part of the 30S ribosomal subunit. Forms a bridge to the 50S subunit in the 70S ribosome, contacting the 23S rRNA.

One of the primary rRNA binding proteins, it binds directly to 16S rRNA where it helps nucleate assembly of the platform of the 30S subunit by binding and bridging several RNA helices of the 16S rRNA. In terms of biological role, forms an intersubunit bridge (bridge B4) with the 23S rRNA of the 50S subunit in the ribosome. The protein is Small ribosomal subunit protein uS15 of Acetivibrio thermocellus (strain ATCC 27405 / DSM 1237 / JCM 9322 / NBRC 103400 / NCIMB 10682 / NRRL B-4536 / VPI 7372) (Clostridium thermocellum).